Reading from the N-terminus, the 378-residue chain is Deoxyhypusine synthase (378 aa).

Residues 107–111 (SNLIS), 133–135 (SAG), Glu-139, and Asp-253 each bind NAD(+). Position 138–139 (138–139 (EE)) interacts with spermidine. Asp-258 lines the spermidine pocket. NAD(+) is bound at residue Gly-300. His-305 is a binding site for spermidine. NAD(+) is bound at residue 325-326 (TG). Spermidine contacts are provided by residues 331–333 (GSD) and 340–346 (EAISWGK). Catalysis depends on Lys-346, which acts as the Nucleophile. NAD(+) is bound at residue 359-360 (DA).

It belongs to the deoxyhypusine synthase family. NAD(+) is required as a cofactor.

It carries out the reaction [eIF5A protein]-L-lysine + spermidine = [eIF5A protein]-deoxyhypusine + propane-1,3-diamine. It functions in the pathway protein modification; eIF5A hypusination. Its function is as follows. Catalyzes the NAD-dependent oxidative cleavage of spermidine and the subsequent transfer of the butylamine moiety of spermidine to the epsilon-amino group of a specific lysine residue of the eIF-5A precursor protein to form the intermediate deoxyhypusine residue. The sequence is that of Deoxyhypusine synthase (DYS1) from Debaryomyces hansenii (strain ATCC 36239 / CBS 767 / BCRC 21394 / JCM 1990 / NBRC 0083 / IGC 2968) (Yeast).